A 166-amino-acid chain; its full sequence is Interferon gamma (166 aa).

Residues 1 to 23 (MNYTSFILAFQLCAILGSSTYYC) form the signal peptide. Gln-24 bears the Pyrrolidone carboxylic acid mark. Asn-39 and Asn-106 each carry an N-linked (GlcNAc...) asparagine glycan. Residues 147–166 (ANLRKRKRSQNPFRGRRALQ) form a disordered region. The segment covering 148–166 (NLRKRKRSQNPFRGRRALQ) has biased composition (basic residues).

This sequence belongs to the type II (or gamma) interferon family. As to quaternary structure, homodimer. Interacts with IFNGR1 (via extracellular domain); this interaction promotes IFNGR1 dimerization. As to expression, released primarily from activated T lymphocytes.

Its subcellular location is the secreted. Its function is as follows. Type II interferon produced by immune cells such as T-cells and NK cells that plays crucial roles in antimicrobial, antiviral, and antitumor responses by activating effector immune cells and enhancing antigen presentation. Primarily signals through the JAK-STAT pathway after interaction with its receptor IFNGR1 to affect gene regulation. Upon IFNG binding, IFNGR1 intracellular domain opens out to allow association of downstream signaling components JAK2, JAK1 and STAT1, leading to STAT1 activation, nuclear translocation and transcription of IFNG-regulated genes. Many of the induced genes are transcription factors such as IRF1 that are able to further drive regulation of a next wave of transcription. Plays a role in class I antigen presentation pathway by inducing a replacement of catalytic proteasome subunits with immunoproteasome subunits. In turn, increases the quantity, quality, and repertoire of peptides for class I MHC loading. Increases the efficiency of peptide generation also by inducing the expression of activator PA28 that associates with the proteasome and alters its proteolytic cleavage preference. Up-regulates as well MHC II complexes on the cell surface by promoting expression of several key molecules such as cathepsins B/CTSB, H/CTSH, and L/CTSL. Participates in the regulation of hematopoietic stem cells during development and under homeostatic conditions by affecting their development, quiescence, and differentiation. This Equus asinus (Donkey) protein is Interferon gamma (IFNG).